A 245-amino-acid polypeptide reads, in one-letter code: Carbohydrate deacetylase (245 aa).

Mg(2+)-binding residues include His-59 and His-125.

It belongs to the YdjC deacetylase family. Homodimer. It depends on Mg(2+) as a cofactor.

Functionally, probably catalyzes the deacetylation of acetylated carbohydrates an important step in the degradation of oligosaccharides. In Listeria welshimeri serovar 6b (strain ATCC 35897 / DSM 20650 / CCUG 15529 / CIP 8149 / NCTC 11857 / SLCC 5334 / V8), this protein is Carbohydrate deacetylase.